A 438-amino-acid chain; its full sequence is GTPase Der (438 aa).

2 consecutive EngA-type G domains span residues 4–168 (PVVA…PAGA) and 176–351 (VRIA…GEYR). GTP is bound by residues 10 to 17 (GRPNVGKS), 57 to 61 (DTGGI), 120 to 123 (NKVD), 182 to 189 (GRPNVGKS), 229 to 233 (DTAGM), and 294 to 297 (NKWD). The 85-residue stretch at 352 to 436 (RQIPTSMLNR…PVRILFRRRE (85 aa)) folds into the KH-like domain.

This sequence belongs to the TRAFAC class TrmE-Era-EngA-EngB-Septin-like GTPase superfamily. EngA (Der) GTPase family. Associates with the 50S ribosomal subunit.

Its function is as follows. GTPase that plays an essential role in the late steps of ribosome biogenesis. The protein is GTPase Der of Desulforudis audaxviator (strain MP104C).